The primary structure comprises 1089 residues: PALM2-AKAP2 fusion protein (1089 aa).

The stretch at 70–107 forms a coiled coil; that stretch reads SEEDEFKVKQLEDNIQRLEQEIQALESEESQISAKEQI. Disordered stretches follow at residues 165–194, 210–231, and 289–362; these read SEDA…SPDH, PGVT…PSHN, and PAHS…SRDG. Positions 173-183 are enriched in basic and acidic residues; the sequence is SKQDNCGDSRL. Phosphoserine occurs at positions 315 and 318. Basic and acidic residues predominate over residues 317 to 328; the sequence is PSDRMAEGERAN. The segment covering 329 to 347 has biased composition (polar residues); it reads GHSTDQPQDLLGNSLQAPA. The residue at position 348 (Ser-348) is a Phosphoserine. Over residues 348–357 the composition is skewed to low complexity; sequence SPSSSTSSHC. Lys-370 is covalently cross-linked (Glycyl lysine isopeptide (Lys-Gly) (interchain with G-Cter in SUMO1); alternate). A Glycyl lysine isopeptide (Lys-Gly) (interchain with G-Cter in SUMO2); alternate cross-link involves residue Lys-370. The tract at residues 429–517 is disordered; that stretch reads KNPGIAAKWW…LSTSQPCTAP (89 aa). Basic and acidic residues predominate over residues 455–470; that stretch reads LESHRKYKERKEKRAQ. Over residues 471 to 508 the composition is skewed to low complexity; sequence QEQLQLQQQQQQQLQQQQLQQQQLQQQQLQQQLQQQQL. Ser-553 is subject to Phosphoserine. The interval 592-644 is disordered; the sequence is TVGGTLEDGGTQAAKEQKAPCVSESQSAGAGPANAATQGKEGPYSEPSKRGPL. 3 positions are modified to phosphoserine: Ser-678, Ser-682, and Ser-734. Residues 712–749 are compositionally biased toward polar residues; the sequence is FSMDNISDSGASNETPSALQENSLADFSLPQTPQTDNP. Disordered regions lie at residues 712–783, 800–899, and 915–934; these read FSMD…DPLE, EQVD…YFSK, and TQES…KQRT. A Phosphothreonine modification is found at Thr-743. Positions 782-795 are PKA-RII subunit binding domain; sequence LEYQAGLLVQNAIQ. Over residues 801–814 the composition is skewed to basic and acidic residues; sequence QVDKAEAHTSKEGS. The residue at position 847 (Ser-847) is a Phosphoserine. Residues 850-871 are compositionally biased toward basic and acidic residues; sequence QEKRDILPKNLPAEDRALREKG. Residues 928–958 adopt a coiled-coil conformation; the sequence is RSRKQRTLSMIEEEIRAAQEREEELKRQRQV. Phosphoserine occurs at positions 936, 964, 995, and 1002. Residues 946–1021 are disordered; that stretch reads QEREEELKRQ…AAGTQRPKNL (76 aa).

Highly expressed in lung and weakly in thymus and cerebellum. Little or no expression in liver, heart and cerebral cortex. All isoforms are expressed in lung, but KL2A and KL2B isoforms are the principal isoforms in cerebellum.

The protein localises to the apical cell membrane. Functionally, binds to regulatory subunit (RII) of protein kinase A. May be involved in establishing polarity in signaling systems or in integrating PKA-RII isoforms with downstream effectors to capture, amplify and focus diffuse, trans-cellular signals carried by cAMP. Binds tp and modulates the structure of the actin cytoskeleton. The polypeptide is PALM2-AKAP2 fusion protein (Mus musculus (Mouse)).